Consider the following 404-residue polypeptide: Argininosuccinate synthase (404 aa).

ATP-binding positions include 10–18 (AFSGGLDTS) and alanine 37. 2 residues coordinate L-citrulline: tyrosine 88 and serine 93. Glycine 118 is an ATP binding site. Residues threonine 120, asparagine 124, and aspartate 125 each coordinate L-aspartate. Asparagine 124 lines the L-citrulline pocket. L-citrulline-binding residues include arginine 128, serine 179, serine 188, glutamate 264, and tyrosine 276.

This sequence belongs to the argininosuccinate synthase family. Type 1 subfamily. Homotetramer.

It is found in the cytoplasm. The catalysed reaction is L-citrulline + L-aspartate + ATP = 2-(N(omega)-L-arginino)succinate + AMP + diphosphate + H(+). It functions in the pathway amino-acid biosynthesis; L-arginine biosynthesis; L-arginine from L-ornithine and carbamoyl phosphate: step 2/3. The chain is Argininosuccinate synthase from Nitrosomonas europaea (strain ATCC 19718 / CIP 103999 / KCTC 2705 / NBRC 14298).